The primary structure comprises 480 residues: ATP synthase subunit beta (480 aa).

Residue 158-165 (GGAGVGKT) coordinates ATP.

Belongs to the ATPase alpha/beta chains family. F-type ATPases have 2 components, CF(1) - the catalytic core - and CF(0) - the membrane proton channel. CF(1) has five subunits: alpha(3), beta(3), gamma(1), delta(1), epsilon(1). CF(0) has three main subunits: a(1), b(2) and c(9-12). The alpha and beta chains form an alternating ring which encloses part of the gamma chain. CF(1) is attached to CF(0) by a central stalk formed by the gamma and epsilon chains, while a peripheral stalk is formed by the delta and b chains.

The protein resides in the cell inner membrane. The catalysed reaction is ATP + H2O + 4 H(+)(in) = ADP + phosphate + 5 H(+)(out). In terms of biological role, produces ATP from ADP in the presence of a proton gradient across the membrane. The catalytic sites are hosted primarily by the beta subunits. In Acidobacterium capsulatum (strain ATCC 51196 / DSM 11244 / BCRC 80197 / JCM 7670 / NBRC 15755 / NCIMB 13165 / 161), this protein is ATP synthase subunit beta.